The following is a 183-amino-acid chain: Probable transcription termination protein NusA (183 aa).

In terms of domain architecture, KH spans 32–98; sequence DERVAFIVKE…DDVWVKRVGK (67 aa). The tract at residues 149–183 is disordered; sequence RKRAKRPVVKDQQQEQTETKQETDVQQDVKETVKE. Positions 156–183 are enriched in basic and acidic residues; sequence VVKDQQQEQTETKQETDVQQDVKETVKE.

It belongs to the NusA family.

It localises to the cytoplasm. Functionally, participates in transcription termination. The sequence is that of Probable transcription termination protein NusA from Methanocaldococcus jannaschii (strain ATCC 43067 / DSM 2661 / JAL-1 / JCM 10045 / NBRC 100440) (Methanococcus jannaschii).